Reading from the N-terminus, the 260-residue chain is DNA repair protein RecO (260 aa).

The protein belongs to the RecO family.

Functionally, involved in DNA repair and RecF pathway recombination. The chain is DNA repair protein RecO from Ligilactobacillus salivarius (strain UCC118) (Lactobacillus salivarius).